A 333-amino-acid chain; its full sequence is D-threonate 4-phosphate dehydrogenase (333 aa).

His140 and Thr141 together coordinate substrate. The a divalent metal cation site is built by His170, His214, and His270. Lys278, Asn287, and Arg296 together coordinate substrate.

Belongs to the PdxA family. PdxA2 subfamily. Homodimer. Requires a divalent metal cation as cofactor.

The enzyme catalyses 4-O-phospho-D-threonate + NAD(+) = dihydroxyacetone phosphate + CO2 + NADH. Functionally, catalyzes the NAD-dependent oxidation and subsequent decarboxylation of D-threonate 4-phosphate to produce dihydroxyacetone phosphate (DHAP). Can also use 4-hydroxy-L-threonine 4-phosphate as substrate. This Cupriavidus necator (strain ATCC 17699 / DSM 428 / KCTC 22496 / NCIMB 10442 / H16 / Stanier 337) (Ralstonia eutropha) protein is D-threonate 4-phosphate dehydrogenase.